The chain runs to 517 residues: Bifunctional purine biosynthesis protein PurH (517 aa).

The MGS-like domain maps to 1–145 (MSPLALVSVS…KNHKDVSVLV (145 aa)).

Belongs to the PurH family.

It carries out the reaction (6R)-10-formyltetrahydrofolate + 5-amino-1-(5-phospho-beta-D-ribosyl)imidazole-4-carboxamide = 5-formamido-1-(5-phospho-D-ribosyl)imidazole-4-carboxamide + (6S)-5,6,7,8-tetrahydrofolate. The enzyme catalyses IMP + H2O = 5-formamido-1-(5-phospho-D-ribosyl)imidazole-4-carboxamide. Its pathway is purine metabolism; IMP biosynthesis via de novo pathway; 5-formamido-1-(5-phospho-D-ribosyl)imidazole-4-carboxamide from 5-amino-1-(5-phospho-D-ribosyl)imidazole-4-carboxamide (10-formyl THF route): step 1/1. It participates in purine metabolism; IMP biosynthesis via de novo pathway; IMP from 5-formamido-1-(5-phospho-D-ribosyl)imidazole-4-carboxamide: step 1/1. This is Bifunctional purine biosynthesis protein PurH from Prochlorococcus marinus subsp. pastoris (strain CCMP1986 / NIES-2087 / MED4).